Consider the following 194-residue polypeptide: MSLVPMVVEQTNRGERSYDIFSRLLNDRIIVLSDEVNDATASLIVAQMLYLEAQDPDKDIQFYINSPGGSVASGFAIYDTMQYVKCDVSTICMGMAASMGAFLLAAGEKGKRFALPNSEIMIHQPLGGARGQATDIKIHAENILRTRDKLNKILSERTGQPLDKIEKDTERDFFMSADEAKAYGIIDDIMVRRK.

The Nucleophile role is filled by Ser98. Residue His123 is part of the active site.

Belongs to the peptidase S14 family. In terms of assembly, fourteen ClpP subunits assemble into 2 heptameric rings which stack back to back to give a disk-like structure with a central cavity, resembling the structure of eukaryotic proteasomes.

It is found in the cytoplasm. The catalysed reaction is Hydrolysis of proteins to small peptides in the presence of ATP and magnesium. alpha-casein is the usual test substrate. In the absence of ATP, only oligopeptides shorter than five residues are hydrolyzed (such as succinyl-Leu-Tyr-|-NHMec, and Leu-Tyr-Leu-|-Tyr-Trp, in which cleavage of the -Tyr-|-Leu- and -Tyr-|-Trp bonds also occurs).. Its function is as follows. Cleaves peptides in various proteins in a process that requires ATP hydrolysis. Has a chymotrypsin-like activity. Plays a major role in the degradation of misfolded proteins. In Ruminiclostridium cellulolyticum (strain ATCC 35319 / DSM 5812 / JCM 6584 / H10) (Clostridium cellulolyticum), this protein is ATP-dependent Clp protease proteolytic subunit.